The sequence spans 25 residues: Caerin-1.17 (25 aa).

Leu25 bears the Leucine amide mark.

This sequence belongs to the frog skin active peptide (FSAP) family. Caerin subfamily. Expressed by the skin dorsal glands.

It is found in the secreted. Functionally, caerin-1.17 shows significant activity against Gram-positive organisms, but is less effective against Gram-negative organisms. This is Caerin-1.17 from Ranoidea gracilenta (Dainty green tree frog).